The sequence spans 475 residues: MDDKELFDRSIFEETNQLHLYDQLNYLKKNDLQKFRKLLNQVQQLDLRSLWLKYRNAKATSQENRKLSPSEVGPLSIVDTSDSSWWRTGLREIARGHVAALVLAGGQGTRLGFAGPKGCFRLGLPNNPSIFELQAQKIKKSLALARAAFPDQEASISIPWYIMVSECTSEETISFFKENDFFGIDKKDVFFFQQGVLPCLDISGRVLFESDSSLAWAPNGNGGIYEALLSSGALNDMNRRGILHITAYSVDNVLVLPVDPVFIGMATTKKLEVATKTVEKIDPAEKVGLLVSSHNHPCVVEYSEISDEACKATENVDGHKHLLLRAANIAYHYFSFDFLQKASLHSSTLPIHLACKKIPFYDVTSHHYTTPLNPNGYKLESFIFDLFPSVSVENFGCFQVPRRTSFSPLKNSSKSPNDNHETCVNDILSLGKSWILKNGGILSPSDCTYVSPECSLQGESLEWIKGKQVSNCKLY.

The short motif at 103–106 is the Substrate binding element; sequence LAGG. UTP contacts are provided by residues 103–106, Lys-117, Gln-194, and Gly-220; that span reads LAGG. Position 221 (Asn-221) interacts with substrate. Asp-251 serves as a coordination point for UTP. The Substrate binding signature appears at 301 to 302; the sequence is EY. Lys-378 serves as a coordination point for UTP. Ser-405 bears the Phosphoserine mark. Lys-410 provides a ligand contact to substrate.

This sequence belongs to the UDPGP type 1 family.

The protein localises to the cytoplasm. It is found in the nucleus. It catalyses the reaction N-acetyl-alpha-D-glucosamine 1-phosphate + UTP + H(+) = UDP-N-acetyl-alpha-D-glucosamine + diphosphate. It functions in the pathway nucleotide-sugar biosynthesis; UDP-N-acetyl-alpha-D-glucosamine biosynthesis; UDP-N-acetyl-alpha-D-glucosamine from N-acetyl-alpha-D-glucosamine 1-phosphate: step 1/1. The sequence is that of Probable UDP-N-acetylglucosamine pyrophosphorylase (uap1) from Schizosaccharomyces pombe (strain 972 / ATCC 24843) (Fission yeast).